Reading from the N-terminus, the 457-residue chain is Fibrinogen C domain-containing protein 1-B (457 aa).

The segment at 1 to 21 (MGSDRWKNIRGTPQMEDSVQE) is disordered. Residues 1–33 (MGSDRWKNIRGTPQMEDSVQEKSQRKGCGYILC) are Cytoplasmic-facing. A helical; Signal-anchor for type II membrane protein transmembrane segment spans residues 34-54 (TVLLSVAVLLAVTVTGAVLFM). Residues 55 to 457 (NQYHAPSTEP…MKIRPQREEN (403 aa)) lie on the Extracellular side of the membrane. The 224-residue stretch at 231 to 454 (CANGSKPRDC…FTEMKIRPQR (224 aa)) folds into the Fibrinogen C-terminal domain. Residue N233 is glycosylated (N-linked (GlcNAc...) asparagine). A disulfide bridge connects residues C240 and C269. An N-linked (GlcNAc...) asparagine glycan is attached at N336. Positions 389 and 391 each coordinate Ca(2+). A disulfide bond links C397 and C410.

Homotetramer; disulfide-linked.

It localises to the membrane. Functionally, acetyl group-binding receptor which shows a calcium-dependent binding to acetylated structures such as chitin, some N-acetylated carbohydrates, and amino acids. This is Fibrinogen C domain-containing protein 1-B (fibcd1-b) from Xenopus laevis (African clawed frog).